A 393-amino-acid chain; its full sequence is NAD(P)H-quinone oxidoreductase subunit H, chloroplastic (393 aa).

Belongs to the complex I 49 kDa subunit family. NDH is composed of at least 16 different subunits, 5 of which are encoded in the nucleus.

It is found in the plastid. It localises to the chloroplast thylakoid membrane. It carries out the reaction a plastoquinone + NADH + (n+1) H(+)(in) = a plastoquinol + NAD(+) + n H(+)(out). The catalysed reaction is a plastoquinone + NADPH + (n+1) H(+)(in) = a plastoquinol + NADP(+) + n H(+)(out). Its function is as follows. NDH shuttles electrons from NAD(P)H:plastoquinone, via FMN and iron-sulfur (Fe-S) centers, to quinones in the photosynthetic chain and possibly in a chloroplast respiratory chain. The immediate electron acceptor for the enzyme in this species is believed to be plastoquinone. Couples the redox reaction to proton translocation, and thus conserves the redox energy in a proton gradient. This is NAD(P)H-quinone oxidoreductase subunit H, chloroplastic from Amborella trichopoda.